We begin with the raw amino-acid sequence, 652 residues long: Carboxypeptidase Z (652 aa).

An N-terminal signal peptide occupies residues 1-20; it reads MPTTPLLLAALAALAALAVA. The FZ domain occupies 41-163; the sequence is THSATCVDLH…APEEEGCYDP (123 aa). Disulfide bonds link Cys-46-Cys-112, Cys-54-Cys-105, Cys-96-Cys-132, Cys-121-Cys-160, and Cys-125-Cys-149. N-linked (GlcNAc...) asparagine glycosylation is present at Asn-60. The Peptidase M14 domain maps to 189 to 505; sequence AHHSYAQMVR…EPLLNFLEMV (317 aa). The Zn(2+) site is built by His-251 and Glu-254. The N-linked (GlcNAc...) asparagine glycan is linked to Asn-284. His-383 lines the Zn(2+) pocket. Catalysis depends on Glu-475, which acts as the Proton donor/acceptor. The segment at 594 to 628 is disordered; the sequence is FLPGPSRALPRSLDPQGAPAQLDFEPPRARRQPAS.

Belongs to the peptidase M14 family. Zn(2+) serves as cofactor. Abundantly expressed in the placenta, with low to moderate levels in the brain, lung, thymus and kidney.

The protein localises to the secreted. It is found in the extracellular space. Its subcellular location is the extracellular matrix. Inhibited by 2-mercaptomethyl-3-guanidinoethylthiopropanoic acid (MGTA) and guanidinoethylmercaptosuccinic acid (GEMSA). Inhibited by chelating agents such as EDTA and EGTA. Functionally, cleaves substrates with C-terminal arginine residues. Probably modulates the Wnt signaling pathway, by cleaving some undefined protein. May play a role in cleavage during prohormone processing. The sequence is that of Carboxypeptidase Z (Cpz) from Rattus norvegicus (Rat).